We begin with the raw amino-acid sequence, 87 residues long: MSKPVLKASDITDELRDEIFELSSNATANYKLEREIAAYIKKQLDVSQGETWHVIVGKNFGSYVTHEKGYFVYFYIGPLAFLVFKTA.

It belongs to the dynein light chain family. Homodimer. Cytoplasmic dynein consists of two catalytic heavy chains (HCs) and a number of non-catalytic subunits which present intermediate chains (ICs), light intermediate chains (LICs) and light chains (LCs). Component of the nuclear pore complex (NPC). NPC constitutes the exclusive means of nucleocytoplasmic transport. NPCs allow the passive diffusion of ions and small molecules and the active, nuclear transport receptor-mediated bidirectional transport of macromolecules such as proteins, RNAs, ribonucleoparticles (RNPs), and ribosomal subunits across the nuclear envelope. Due to its 8-fold rotational symmetry, all subunits are present with 8 copies or multiples thereof.

Its subcellular location is the cytoplasm. The protein localises to the cytoskeleton. It localises to the nucleus. It is found in the nuclear pore complex. In terms of biological role, acts as one of several non-catalytic accessory components of the cytoplasmic dynein complex that are thought to be involved in linking dynein to cargos and to adapter proteins that regulate dynein function. Cytoplasmic dynein 1 acts as a motor for the intracellular retrograde motility of vesicles and organelles along microtubules. May play a role in changing or maintaining the spatial distribution of cytoskeletal structures. Also a component of the nuclear pore complex. The protein is Dynein light chain 1, cytoplasmic (DYN2) of Kluyveromyces lactis (strain ATCC 8585 / CBS 2359 / DSM 70799 / NBRC 1267 / NRRL Y-1140 / WM37) (Yeast).